Here is a 142-residue protein sequence, read N- to C-terminus: Putative pre-16S rRNA nuclease (142 aa).

This sequence belongs to the YqgF nuclease family.

Its subcellular location is the cytoplasm. In terms of biological role, could be a nuclease involved in processing of the 5'-end of pre-16S rRNA. In Mesoplasma florum (strain ATCC 33453 / NBRC 100688 / NCTC 11704 / L1) (Acholeplasma florum), this protein is Putative pre-16S rRNA nuclease.